The following is a 347-amino-acid chain: Ribosomal RNA large subunit methyltransferase M (347 aa).

S-adenosyl-L-methionine contacts are provided by residues Ser-184, 217 to 220 (APGG), Asp-236, Asp-256, and Asp-272. Lys-301 serves as the catalytic Proton acceptor.

This sequence belongs to the class I-like SAM-binding methyltransferase superfamily. RNA methyltransferase RlmE family. RlmM subfamily. As to quaternary structure, monomer.

It localises to the cytoplasm. It catalyses the reaction cytidine(2498) in 23S rRNA + S-adenosyl-L-methionine = 2'-O-methylcytidine(2498) in 23S rRNA + S-adenosyl-L-homocysteine + H(+). Catalyzes the 2'-O-methylation at nucleotide C2498 in 23S rRNA. The protein is Ribosomal RNA large subunit methyltransferase M of Xanthomonas oryzae pv. oryzae (strain KACC10331 / KXO85).